The chain runs to 492 residues: Glutamyl-tRNA(Gln) amidotransferase subunit A (492 aa).

Active-site charge relay system residues include K79 and S154. Catalysis depends on S178, which acts as the Acyl-ester intermediate.

The protein belongs to the amidase family. GatA subfamily. In terms of assembly, heterotrimer of A, B and C subunits.

It carries out the reaction L-glutamyl-tRNA(Gln) + L-glutamine + ATP + H2O = L-glutaminyl-tRNA(Gln) + L-glutamate + ADP + phosphate + H(+). In terms of biological role, allows the formation of correctly charged Gln-tRNA(Gln) through the transamidation of misacylated Glu-tRNA(Gln) in organisms which lack glutaminyl-tRNA synthetase. The reaction takes place in the presence of glutamine and ATP through an activated gamma-phospho-Glu-tRNA(Gln). This is Glutamyl-tRNA(Gln) amidotransferase subunit A from Acinetobacter baumannii (strain ACICU).